The following is a 328-amino-acid chain: Nickel import system permease protein NikB (328 aa).

The next 6 helical transmembrane spans lie at 11 to 31, 104 to 124, 139 to 159, 170 to 190, 229 to 249, and 279 to 299; these read LMQMIVVLFVISTLTFILMKL, LLISFSTLVLSLCISIPLGII, VISTLSISLPAFFIGIILLFI, ILSQFILPVITLSLGMCAYII, ILPIIPLLGISLGSLIGGTVV, and VLFIGFFVVIINTIADLLTLL. The 198-residue stretch at 100-297 folds into the ABC transmembrane type-1 domain; that stretch reads APITLLISFS…IINTIADLLT (198 aa).

Belongs to the binding-protein-dependent transport system permease family. OppBC subfamily. The complex is composed of two ATP-binding proteins (NikD and NikE), two transmembrane proteins (NikB and NikC) and a solute-binding protein (NikA).

The protein resides in the cell membrane. Part of the ABC transporter complex NikABCDE (Opp2) involved in nickel import. Probably responsible for the translocation of the substrate across the membrane. In Staphylococcus aureus (strain bovine RF122 / ET3-1), this protein is Nickel import system permease protein NikB.